A 535-amino-acid chain; its full sequence is uncharacterized protein (535 aa).

WD repeat units lie at residues 189–226 (RDDF…TRVL), 228–267 (ESIY…PRIS), 269–314 (HHPG…AVLV), 320–359 (AHDE…QPLY), 362–404 (QQNA…KIDE), and 462–505 (VHSV…SWHN).

It belongs to the WD repeat CDC20/Fizzy family.

This is an uncharacterized protein from Schizosaccharomyces pombe (strain 972 / ATCC 24843) (Fission yeast).